Here is a 123-residue protein sequence, read N- to C-terminus: Large ribosomal subunit protein uL29 (123 aa).

It belongs to the universal ribosomal protein uL29 family.

This Euphorbia esula (Leafy spurge) protein is Large ribosomal subunit protein uL29 (RPL35).